A 466-amino-acid polypeptide reads, in one-letter code: Cysteine--tRNA ligase (466 aa).

Residue Cys-29 participates in Zn(2+) binding. The 'HIGH' region motif lies at 31–41; the sequence is ATVQAAPHIGH. Residues Cys-208, His-233, and Glu-237 each coordinate Zn(2+). The short motif at 264 to 268 is the 'KMSKS' region element; that stretch reads KMSKS. Lys-267 provides a ligand contact to ATP.

Belongs to the class-I aminoacyl-tRNA synthetase family. Monomer. Zn(2+) is required as a cofactor.

It is found in the cytoplasm. It catalyses the reaction tRNA(Cys) + L-cysteine + ATP = L-cysteinyl-tRNA(Cys) + AMP + diphosphate. The chain is Cysteine--tRNA ligase from Streptomyces avermitilis (strain ATCC 31267 / DSM 46492 / JCM 5070 / NBRC 14893 / NCIMB 12804 / NRRL 8165 / MA-4680).